The primary structure comprises 529 residues: Peptide chain release factor 3 (529 aa).

One can recognise a tr-type G domain in the interval Ser-11–Leu-280. GTP is bound by residues Ser-20–Thr-27, Asp-88–His-92, and Asn-142–Asp-145.

Belongs to the TRAFAC class translation factor GTPase superfamily. Classic translation factor GTPase family. PrfC subfamily.

Its subcellular location is the cytoplasm. Its function is as follows. Increases the formation of ribosomal termination complexes and stimulates activities of RF-1 and RF-2. It binds guanine nucleotides and has strong preference for UGA stop codons. It may interact directly with the ribosome. The stimulation of RF-1 and RF-2 is significantly reduced by GTP and GDP, but not by GMP. This is Peptide chain release factor 3 from Vibrio vulnificus (strain YJ016).